A 720-amino-acid chain; its full sequence is Mitogen-activated protein kinase 6 (720 aa).

Met1 participates in a covalent cross-link: Peptide (Met-Gly) (interchain with G-Cter in ubiquitin). The 297-residue stretch at 20-316 (YMDLKPLGCG…AEEALSHPYM (297 aa)) folds into the Protein kinase domain. ATP-binding positions include 26–34 (LGCGGNGLV) and Lys49. Residue Asp152 is the Proton acceptor of the active site. Residue Ser189 is modified to Phosphoserine; by PAK1, PAK2 and PAK3. Positions 189–191 (SEG) match the SEG motif motif. The short motif at 332-337 (FHIEDE) is the FRIEDE motif element. Ser386, Ser452, Ser554, and Ser556 each carry phosphoserine. The disordered stretch occupies residues 638-657 (SEMLETEPVEEGKRGERGRE). Positions 647–657 (EEGKRGERGRE) are enriched in basic and acidic residues. Ser683 is subject to Phosphoserine. A compositionally biased stretch (polar residues) spans 698-714 (PSAMKSSPQIPHKTYSN). Positions 698 to 720 (PSAMKSSPQIPHKTYSNILKHLN) are disordered.

The protein belongs to the protein kinase superfamily. CMGC Ser/Thr protein kinase family. MAP kinase subfamily. Heterodimer with ERK4/MAPK4. Interacts with (via FRIEDE motif) MAPKAPK5. Interacts with UBE3A; this interaction may be indirect and mediated by HERC2, possibly via HERC2 interaction with NEURL4. The cofactor is Mg(2+). Phosphorylated at Ser-189 by PAK1, PAK2 and PAK3 resulting in catalytic activation. Phosphorylated by MAPKAPK5 at other sites. Post-translationally, ubiquitination at Met-1 leads to degradation by the proteasome pathway. Highest levels within the nervous system, expressed in different tissues, mostly in skeletal muscle.

The protein resides in the cytoplasm. It is found in the nucleus. It carries out the reaction L-seryl-[protein] + ATP = O-phospho-L-seryl-[protein] + ADP + H(+). It catalyses the reaction L-threonyl-[protein] + ATP = O-phospho-L-threonyl-[protein] + ADP + H(+). Its activity is regulated as follows. Activated by phosphorylation at Ser-189. Its function is as follows. Atypical MAPK protein. Phosphorylates microtubule-associated protein 2 (MAP2) and MAPKAPK5. The precise role of the complex formed with MAPKAPK5 is still unclear, but the complex follows a complex set of phosphorylation events: upon interaction with atypical MAPKAPK5, ERK3/MAPK6 is phosphorylated at Ser-189 and then mediates phosphorylation and activation of MAPKAPK5, which in turn phosphorylates ERK3/MAPK6. May promote entry in the cell cycle. The chain is Mitogen-activated protein kinase 6 (Mapk6) from Rattus norvegicus (Rat).